A 130-amino-acid polypeptide reads, in one-letter code: Small ribosomal subunit protein uS9 (130 aa).

This sequence belongs to the universal ribosomal protein uS9 family.

In Paracidovorax citrulli (strain AAC00-1) (Acidovorax citrulli), this protein is Small ribosomal subunit protein uS9.